The chain runs to 190 residues: Cancer-related nucleoside-triphosphatase (190 aa).

A2 is subject to N-acetylalanine. Residues 9 to 16 (GPPGVGKT) and 109 to 116 (VCVIDEIG) contribute to the ATP site. N6-acetyllysine is present on K165.

This sequence belongs to the THEP1 NTPase family. Monomer.

The enzyme catalyses a ribonucleoside 5'-triphosphate + H2O = a ribonucleoside 5'-diphosphate + phosphate + H(+). The catalysed reaction is 5-methyl-UTP + H2O = 5-methyl-UDP + phosphate + H(+). It carries out the reaction CTP + H2O = CDP + phosphate + H(+). It catalyses the reaction ATP + H2O = ADP + phosphate + H(+). The enzyme catalyses GTP + H2O = GDP + phosphate + H(+). Functionally, has nucleotide phosphatase activity towards ATP, GTP, CTP, TTP and UTP. Hydrolyzes nucleoside diphosphates with lower efficiency. The polypeptide is Cancer-related nucleoside-triphosphatase (Homo sapiens (Human)).